A 1117-amino-acid polypeptide reads, in one-letter code: Endogenous retrovirus group K member 9 Pol protein (1117 aa).

A lipid anchor (N-myristoyl glycine) is attached at Gly-2. One can recognise a Reverse transcriptase domain in the interval 58-195 (KDWKRIGKEL…AGQVPVTLQP (138 aa)). Residues 165–264 (GKGPELVGPS…APPSRQGSEL (100 aa)) are disordered. Residues 232–247 (GMPPAPQGRAPYPQPP) show a composition bias toward pro residues. CCHC-type zinc fingers lie at residues 544–561 (GKCY…NCPV) and 580–597 (DLCP…QCRS). Residues 598-629 (KFDKNGQPLSGNEQRGQPQAPQQTGAFPIQPF) are disordered. Polar residues predominate over residues 604–622 (QPLSGNEQRGQPQAPQQTG). Residues 800–875 (FEGLVDTGAD…IPLNLWGRDL (76 aa)) form the Peptidase A2 domain. The active site involves Asp-805. The G-patch domain occupies 890 to 936 (YSPTSQKIMTKRGYIPGKGLGKNEDGIKIPFEAKINQKREGIGYPFL).

It belongs to the beta type-B retroviral polymerase family. HERV class-II K(HML-2) pol subfamily. Post-translationally, myristoylation is essential for retroviral assembly. Alteration of the glycine residue leads to a block in the budding of particles and an accumulation of Gag inside the cell. In terms of processing, specific enzymatic cleavages may yield mature proteins.

Its subcellular location is the cell membrane. It carries out the reaction Processing at the authentic HIV-1 PR recognition site and release of the mature p17 matrix and the p24 capsid protein, as a result of the cleavage of the -SQNY-|-PIVQ- cleavage site.. The enzyme catalyses DNA(n) + a 2'-deoxyribonucleoside 5'-triphosphate = DNA(n+1) + diphosphate. The catalysed reaction is Endonucleolytic cleavage to 5'-phosphomonoester.. The products of the Gag polyproteins of infectious retroviruses perform highly complex orchestrated tasks during the assembly, budding, maturation, and infection stages of the viral replication cycle. During viral assembly, the proteins form membrane associations and self-associations that ultimately result in budding of an immature virion from the infected cell. Gag precursors also function during viral assembly to selectively bind and package two plus strands of genomic RNA. Endogenous Gag proteins may have kept, lost or modified their original function during evolution. Its function is as follows. Early post-infection, the reverse transcriptase converts the viral RNA genome into double-stranded viral DNA. The RNase H domain of the reverse transcriptase performs two functions. It degrades the RNA template and specifically removes the RNA primer from the RNA/DNA hybrid. Following nuclear import, the integrase catalyzes the insertion of the linear, double-stranded viral DNA into the host cell chromosome. Endogenous Pol proteins may have kept, lost or modified their original function during evolution. This is Endogenous retrovirus group K member 9 Pol protein (ERVK-9) from Homo sapiens (Human).